Reading from the N-terminus, the 300-residue chain is Geranylgeranyl pyrophosphate synthase (300 aa).

Met1 is modified (N-acetylmethionine). Residues Lys25, Arg28, and His57 each coordinate isopentenyl diphosphate. Residues Asp64 and Asp68 each contribute to the Mg(2+) site. Arg73 contributes to the dimethylallyl diphosphate binding site. Position 74 (Arg74) interacts with isopentenyl diphosphate. Residues Lys151, Thr152, Gln185, Lys202, and Lys212 each coordinate dimethylallyl diphosphate.

This sequence belongs to the FPP/GGPP synthase family. As to quaternary structure, homohexamer; trimer of homodimers. It depends on Mg(2+) as a cofactor.

Its subcellular location is the cytoplasm. It is found in the perinuclear region. It localises to the myofibril. The protein resides in the sarcomere. The protein localises to the z line. The enzyme catalyses isopentenyl diphosphate + dimethylallyl diphosphate = (2E)-geranyl diphosphate + diphosphate. It carries out the reaction isopentenyl diphosphate + (2E)-geranyl diphosphate = (2E,6E)-farnesyl diphosphate + diphosphate. It catalyses the reaction isopentenyl diphosphate + (2E,6E)-farnesyl diphosphate = (2E,6E,10E)-geranylgeranyl diphosphate + diphosphate. The protein operates within isoprenoid biosynthesis; farnesyl diphosphate biosynthesis; farnesyl diphosphate from geranyl diphosphate and isopentenyl diphosphate: step 1/1. Its pathway is isoprenoid biosynthesis; geranyl diphosphate biosynthesis; geranyl diphosphate from dimethylallyl diphosphate and isopentenyl diphosphate: step 1/1. It functions in the pathway isoprenoid biosynthesis; geranylgeranyl diphosphate biosynthesis; geranylgeranyl diphosphate from farnesyl diphosphate and isopentenyl diphosphate: step 1/1. Catalyzes the trans-addition of the three molecules of isopentenyl diphosphate (IPP) onto dimethylallyl pyrophosphate (DMAPP) to form geranylgeranyl pyrophosphate, an important precursor of carotenoids and geranylated proteins. The sequence is that of Geranylgeranyl pyrophosphate synthase from Mus musculus (Mouse).